The following is a 431-amino-acid chain: Argininosuccinate lyase (431 aa).

The protein belongs to the lyase 1 family. Argininosuccinate lyase subfamily.

Its subcellular location is the cytoplasm. It carries out the reaction 2-(N(omega)-L-arginino)succinate = fumarate + L-arginine. It functions in the pathway amino-acid biosynthesis; L-arginine biosynthesis; L-arginine from L-ornithine and carbamoyl phosphate: step 3/3. The chain is Argininosuccinate lyase from Xanthomonas campestris pv. campestris (strain B100).